We begin with the raw amino-acid sequence, 313 residues long: Desiccation-related protein PCC13-62 (313 aa).

The first 26 residues, 1–26 (MAQQPTFASAALVSFFLALICSCSYA), serve as a signal peptide directing secretion.

The chain is Desiccation-related protein PCC13-62 from Craterostigma plantagineum (Blue gem).